Here is a 285-residue protein sequence, read N- to C-terminus: GPN-loop GTPase 3 (285 aa).

13–18 (GSGKST) contacts GTP. The Gly-Pro-Asn (GPN)-loop; involved in dimer interface signature appears at 70–72 (GPN). GTP is bound at residue 172–175 (TKID). Residues 253-276 (GEDLEPKEPPLENDDDDDDDEGDE) form a disordered region. Positions 263–275 (LENDDDDDDDEGD) are enriched in acidic residues.

It belongs to the GPN-loop GTPase family. In terms of assembly, heterodimer with gpn1. Binds to RNA polymerase II (RNAPII).

In terms of biological role, small GTPase required for proper localization of RNA polymerase II (RNAPII). May act at an RNAP assembly step prior to nuclear import. The sequence is that of GPN-loop GTPase 3 (gpn3) from Dictyostelium discoideum (Social amoeba).